The chain runs to 102 residues: Small ribosomal subunit protein uS10 (102 aa).

This sequence belongs to the universal ribosomal protein uS10 family. As to quaternary structure, part of the 30S ribosomal subunit.

Its function is as follows. Involved in the binding of tRNA to the ribosomes. The chain is Small ribosomal subunit protein uS10 from Sulfurihydrogenibium sp. (strain YO3AOP1).